The chain runs to 284 residues: Tropomyosin alpha-1 chain (284 aa).

Residue Met1 is modified to N-acetylmethionine. Positions 1-40 are disordered; it reads MDAIKKKMQMLKLDKENALDRAEQAESDKKASEDRSKQLE. Residues 1–284 are a coiled coil; the sequence is MDAIKKKMQM…DHALNDMTSI (284 aa). A compositionally biased stretch (basic and acidic residues) spans 12-40; sequence KLDKENALDRAEQAESDKKASEDRSKQLE.

Homodimer. Heterodimer of an alpha (TPM1, TPM3 or TPM4) and a beta (TPM2) chain.

The protein localises to the cytoplasm. The protein resides in the cytoskeleton. Binds to actin filaments in muscle and non-muscle cells. Plays a central role, in association with the troponin complex, in the calcium dependent regulation of vertebrate striated muscle contraction. Smooth muscle contraction is regulated by interaction with caldesmon. In non-muscle cells is implicated in stabilizing cytoskeleton actin filaments. This chain is Tropomyosin alpha-1 chain, found in Chelon auratus (Golden grey mullet).